Consider the following 167-residue polypeptide: Phosphopantetheine adenylyltransferase (167 aa).

Residue serine 10 participates in substrate binding. ATP-binding positions include 10 to 11 (SF) and histidine 18. 3 residues coordinate substrate: lysine 42, alanine 79, and arginine 93. ATP contacts are provided by residues 94–96 (GLR), glutamate 104, and 129–135 (VGHITAT).

The protein belongs to the bacterial CoaD family. Homohexamer. It depends on Mg(2+) as a cofactor.

The protein localises to the cytoplasm. The enzyme catalyses (R)-4'-phosphopantetheine + ATP + H(+) = 3'-dephospho-CoA + diphosphate. It functions in the pathway cofactor biosynthesis; coenzyme A biosynthesis; CoA from (R)-pantothenate: step 4/5. In terms of biological role, reversibly transfers an adenylyl group from ATP to 4'-phosphopantetheine, yielding dephospho-CoA (dPCoA) and pyrophosphate. This Methylocella silvestris (strain DSM 15510 / CIP 108128 / LMG 27833 / NCIMB 13906 / BL2) protein is Phosphopantetheine adenylyltransferase.